The following is a 628-amino-acid chain: Probable potassium transport system protein Kup (628 aa).

The next 11 membrane-spanning stretches (helical) occupy residues 56–76, 109–129, 141–161, 174–194, 209–229, 253–273, 295–315, 343–363, 372–392, 400–420, and 425–445; these read ILSLVVWTLTVIVSLKYVLLI, LILGVFGTAIFFGDGVITPAI, AAPGLHRYVVPVTLVVLTLLF, FFGPVTAVWFIVLALLGVVHI, ALAFMWQHPGTAFVSLGAVVL, WFSLVMPALMINYFGQGAMLL, LIVLATLATVIASQALITAAF, IYVPFVNWGLYACIVLAVVTF, AYGIAVTTDMLITTTMTFFVI, WALCVAATGFFFLVDAMFFAA, and ILDGGWFPLAIGAAMFTLMMT.

Belongs to the HAK/KUP transporter (TC 2.A.72) family.

The protein resides in the cell inner membrane. It carries out the reaction K(+)(in) + H(+)(in) = K(+)(out) + H(+)(out). In terms of biological role, transport of potassium into the cell. Likely operates as a K(+):H(+) symporter. The protein is Probable potassium transport system protein Kup of Methylibium petroleiphilum (strain ATCC BAA-1232 / LMG 22953 / PM1).